The following is a 350-amino-acid chain: Aldo-keto reductase 1B (350 aa).

Tyr-84 acts as the Proton donor in catalysis. His-146 serves as a coordination point for substrate. An NADP(+)-binding site is contributed by 244–306; it reads SPLGSPNRPW…SVTKDRIESN (63 aa).

This sequence belongs to the aldo/keto reductase family.

Its subcellular location is the cytoplasm. The enzyme catalyses an alditol + NADP(+) = an aldose + NADPH + H(+). It carries out the reaction all-trans-retinol + NADP(+) = all-trans-retinal + NADPH + H(+). It catalyses the reaction 9-cis-retinol + NADP(+) = 9-cis-retinal + NADPH + H(+). The catalysed reaction is 13-cis-retinol + NADP(+) = 13-cis-retinal + NADPH + H(+). The enzyme catalyses glycerol + NADP(+) = D-glyceraldehyde + NADPH + H(+). It carries out the reaction glycerol + NADP(+) = L-glyceraldehyde + NADPH + H(+). It catalyses the reaction prenol + NADP(+) = 3-methyl-2-butenal + NADPH + H(+). The catalysed reaction is (E)-hex-2-en-1-ol + NADP(+) = (E)-hex-2-enal + NADPH + H(+). The enzyme catalyses (E,E)-2,4-hexadien-1-ol + NADP(+) = (E,E)-2,4-hexadienal + NADPH + H(+). It carries out the reaction a 4-hydroxynonen-1-ol + NADP(+) = a 4-hydroxynonenal + NADPH + H(+). It catalyses the reaction prostaglandin F2alpha + NADP(+) = prostaglandin H2 + NADPH + H(+). The catalysed reaction is allyl alcohol + NADP(+) = acrolein + NADPH + H(+). The enzyme catalyses pyridine 3-methanol + NADP(+) = pyridine-3-carbaldehyde + NADPH + H(+). It carries out the reaction 1-hexadecanoyl-2-(5-oxopentanoyl)-sn-glycero-3-phosphocholine + NADPH + H(+) = 1-hexadecanoyl-2-(5-hydroxypentanoyl)-sn-glycero-3-phosphocholine + NADP(+). It catalyses the reaction 1-hexadecanoyl-2-(7-oxoheptanoyl)-sn-glycero-3-phosphocholine + NADPH + H(+) = 1-hexadecanoyl-2-(7-hydroxyheptanoyl)-sn-glycero-3-phosphocholine + NADP(+). The catalysed reaction is 1-hexadecanoyl-2-(9-oxononanoyl)-sn-glycero-3-phosphocholine + NADPH + H(+) = 1-hexadecanoyl-2-(9-hydroxynonanoyl)-sn-glycero-3-phosphocholine + NADP(+). The enzyme catalyses 1-hexadecanoyl-2-(5-oxopentanoyl)-sn-glycero-3-phosphoethanolamine + NADPH + H(+) = 1-hexadecanoyl-2-(5-hydroxypentanoyl)-sn-glycero-3-phosphoethanolamine + NADP(+). In terms of biological role, catalyzes the NADPH-dependent reduction of a wide variety of carbonyl-containing compounds to their corresponding alcohols. Displays enzymatic activity towards endogenous metabolites such as aromatic and aliphatic aldehydes, ketones, monosaccharides, bile acids and xenobiotics substrates. Key enzyme in the polyol pathway, catalyzes reduction of glucose to sorbitol during hyperglycemia. Reduces steroids and their derivatives and prostaglandins. Through production of prostaglandin F2alpha may regulate the activity of non-muscle myosin II in an autocrine or paracrine fashion; influences border cell and nurse cell stiffness to facilitate border cell cluster migration. Also regulates the cell surface localization of integrins in an autocrine or paracrine fashion; influences border cell adhesion to maintain border cell cluster morphology. In hemocytes, probably contributes to production of sugar alcohols in the hemolymph, which act as alarmins involved in gut-fat body innate immunological communication (GFIC); leads to activation of the imd/Relish signaling pathway in the fat body. This chain is Aldo-keto reductase 1B, found in Drosophila melanogaster (Fruit fly).